The chain runs to 464 residues: GDNF family receptor alpha-2 (464 aa).

The signal sequence occupies residues 1-21 (MILANVFCLFFFLDETLRSLA). Cystine bridges form between cysteine 40-cysteine 93, cysteine 95-cysteine 105, cysteine 161-cysteine 222, cysteine 168-cysteine 174, cysteine 185-cysteine 200, cysteine 195-cysteine 241, cysteine 224-cysteine 229, cysteine 251-cysteine 323, cysteine 258-cysteine 264, cysteine 275-cysteine 293, and cysteine 285-cysteine 347. Residue asparagine 52 is glycosylated (N-linked (GlcNAc...) asparagine). Asparagine 357 carries N-linked (GlcNAc...) asparagine glycosylation. A disordered region spans residues 363–392 (VSPKGPSFQATQAPRVEKTPSLPDDLSDST). The span at 381 to 392 (TPSLPDDLSDST) shows a compositional bias: low complexity. A glycan (N-linked (GlcNAc...) asparagine) is linked at asparagine 413. Serine 444 is lipidated: GPI-anchor amidated serine. A propeptide spans 445-464 (RARPSAALTVLSVLMLKLAL) (removed in mature form).

This sequence belongs to the GDNFR family. Interacts with NRTN ligand and RET: forms a 2:2:2 ternary complex composed of NRTN ligand, GFRA2 and RET receptor. Also forms a 4:4:4 tetrameric complex composed of 4 copies of NRTN ligand, GFRA2 and RET receptor, which prevents endocytosis of RET. Interacts with SORL1. In terms of tissue distribution, found in both brain and placenta.

It localises to the cell membrane. In terms of biological role, receptor for neurturin (NRTN), a growth factor that supports the survival of sympathetic neurons. NRTN-binding leads to autophosphorylation and activation of the RET receptor. Also able to mediate GDNF signaling through the RET tyrosine kinase receptor. Its function is as follows. Participates in NRTN-induced 'Ser-727' phosphorylation of STAT3. The sequence is that of GDNF family receptor alpha-2 (GFRA2) from Homo sapiens (Human).